Here is a 548-residue protein sequence, read N- to C-terminus: T-complex protein 1 subunit theta (548 aa).

Residues 528–548 form a disordered region; sequence ATGGPKPRGPKQQDEDDDGMA.

This sequence belongs to the TCP-1 chaperonin family. In terms of assembly, heterooligomeric complex.

Its subcellular location is the cytoplasm. Its function is as follows. Molecular chaperone; assists the folding of proteins upon ATP hydrolysis. Known to play a role, in vitro, in the folding of actin and tubulin. Required for correct subcellular localization of pgl-1. In Caenorhabditis briggsae, this protein is T-complex protein 1 subunit theta.